The sequence spans 876 residues: Alanine--tRNA ligase (876 aa).

Zn(2+) is bound by residues His565, His569, Cys667, and His671.

This sequence belongs to the class-II aminoacyl-tRNA synthetase family. The cofactor is Zn(2+).

The protein localises to the cytoplasm. The catalysed reaction is tRNA(Ala) + L-alanine + ATP = L-alanyl-tRNA(Ala) + AMP + diphosphate. Its function is as follows. Catalyzes the attachment of alanine to tRNA(Ala) in a two-step reaction: alanine is first activated by ATP to form Ala-AMP and then transferred to the acceptor end of tRNA(Ala). Also edits incorrectly charged Ser-tRNA(Ala) and Gly-tRNA(Ala) via its editing domain. The sequence is that of Alanine--tRNA ligase from Staphylococcus aureus (strain USA300).